Here is a 460-residue protein sequence, read N- to C-terminus: MALWGGRFTQAADKRFKDFNDSLRFDYRLAEQDIEGSIGWSKALVSVNILTQDEQRQLEKALNELLIEVRSNPQAILQDDAEDIHSWVESKLIDKVGNLGKKLHTGRSRNDQVALDIKMWCKAQVLELQKTVRELQAKLVLTAENTQHAVMPGYTHLQRAQPISFAHWCMAYVEMLERDYTRLGDAYQRMNACPLGSGALAGTAYPIDREQLAQDLDFASATRNSLDSVSDRDHIIELLSTASLSMAHLSRFAEDMIIFNSGEADFVELSDRVTSGSSLMPQKKNPDACELIRGKTGRVIGSLMGMLTTVKGLPLAYNKDMQEDKEGIFDALDTWHDCLTMAAFVLEDIKVNVERTREAALKGYSNATELADYLVAKGVPFRDSHHIVGETVVYAIKVHKGLEDLTVDEFRQFSDVVSDDVYDILSLQSCLDKRCAKGGVSPLRVAEAIADAKQRIGLNA.

This sequence belongs to the lyase 1 family. Argininosuccinate lyase subfamily.

It is found in the cytoplasm. The enzyme catalyses 2-(N(omega)-L-arginino)succinate = fumarate + L-arginine. It functions in the pathway amino-acid biosynthesis; L-arginine biosynthesis; L-arginine from L-ornithine and carbamoyl phosphate: step 3/3. This chain is Argininosuccinate lyase, found in Actinobacillus succinogenes (strain ATCC 55618 / DSM 22257 / CCUG 43843 / 130Z).